The sequence spans 159 residues: CASP-like protein 5C1 (159 aa).

Over methionine 1–arginine 6 the chain is Cytoplasmic. Residues serine 7 to phenylalanine 29 traverse the membrane as a helical segment. Residues serine 30–alanine 48 lie on the Extracellular side of the membrane. A helical transmembrane segment spans residues phenylalanine 49 to isoleucine 69. The Cytoplasmic segment spans residues aspartate 70–cysteine 94. The chain crosses the membrane as a helical span at residues alanine 95–leucine 117. The Extracellular portion of the chain corresponds to histidine 118–alanine 134. A helical membrane pass occupies residues methionine 135–valine 155. Residues alanine 156–tryptophan 159 lie on the Cytoplasmic side of the membrane.

Belongs to the Casparian strip membrane proteins (CASP) family. In terms of assembly, homodimer and heterodimers.

It localises to the cell membrane. The protein is CASP-like protein 5C1 of Zea mays (Maize).